A 347-amino-acid chain; its full sequence is Holliday junction branch migration complex subunit RuvB (347 aa).

The tract at residues 1 to 183 is large ATPase domain (RuvB-L); it reads MSDERVVTPR…FGSVHRLEFY (183 aa). ATP contacts are provided by residues Leu-22, Arg-23, Gly-64, Lys-67, Thr-68, Ser-69, 130 to 132, Arg-173, Tyr-183, and Arg-220; that span reads EDF. A Mg(2+)-binding site is contributed by Thr-68. Residues 184–254 form a small ATPAse domain (RuvB-S) region; sequence SVDALYEIVM…VARDALAKLE (71 aa). The interval 257–347 is head domain (RuvB-H); that stretch reads HLGLDENDRR…NGAEQGRLWT (91 aa). Arg-312 and Arg-317 together coordinate DNA.

The protein belongs to the RuvB family. As to quaternary structure, homohexamer. Forms an RuvA(8)-RuvB(12)-Holliday junction (HJ) complex. HJ DNA is sandwiched between 2 RuvA tetramers; dsDNA enters through RuvA and exits via RuvB. An RuvB hexamer assembles on each DNA strand where it exits the tetramer. Each RuvB hexamer is contacted by two RuvA subunits (via domain III) on 2 adjacent RuvB subunits; this complex drives branch migration. In the full resolvosome a probable DNA-RuvA(4)-RuvB(12)-RuvC(2) complex forms which resolves the HJ.

It localises to the cytoplasm. It carries out the reaction ATP + H2O = ADP + phosphate + H(+). Its function is as follows. The RuvA-RuvB-RuvC complex processes Holliday junction (HJ) DNA during genetic recombination and DNA repair, while the RuvA-RuvB complex plays an important role in the rescue of blocked DNA replication forks via replication fork reversal (RFR). RuvA specifically binds to HJ cruciform DNA, conferring on it an open structure. The RuvB hexamer acts as an ATP-dependent pump, pulling dsDNA into and through the RuvAB complex. RuvB forms 2 homohexamers on either side of HJ DNA bound by 1 or 2 RuvA tetramers; 4 subunits per hexamer contact DNA at a time. Coordinated motions by a converter formed by DNA-disengaged RuvB subunits stimulates ATP hydrolysis and nucleotide exchange. Immobilization of the converter enables RuvB to convert the ATP-contained energy into a lever motion, pulling 2 nucleotides of DNA out of the RuvA tetramer per ATP hydrolyzed, thus driving DNA branch migration. The RuvB motors rotate together with the DNA substrate, which together with the progressing nucleotide cycle form the mechanistic basis for DNA recombination by continuous HJ branch migration. Branch migration allows RuvC to scan DNA until it finds its consensus sequence, where it cleaves and resolves cruciform DNA. This Roseiflexus castenholzii (strain DSM 13941 / HLO8) protein is Holliday junction branch migration complex subunit RuvB.